A 54-amino-acid polypeptide reads, in one-letter code: Lectin alpha-1 chain (54 aa).

This sequence belongs to the leguminous lectin family. In terms of assembly, tetramer of two alpha and two beta chains.

The sequence is that of Lectin alpha-1 chain from Lathyrus cicera (Flat-pod pea).